The chain runs to 104 residues: Large ribosomal subunit protein bL21 (104 aa).

It belongs to the bacterial ribosomal protein bL21 family. In terms of assembly, part of the 50S ribosomal subunit. Contacts protein L20.

Its function is as follows. This protein binds to 23S rRNA in the presence of protein L20. This is Large ribosomal subunit protein bL21 from Thermotoga petrophila (strain ATCC BAA-488 / DSM 13995 / JCM 10881 / RKU-1).